A 492-amino-acid chain; its full sequence is Replication factor C large subunit (492 aa).

46 to 53 (GPPGSGKT) contributes to the ATP binding site. A disordered region spans residues 445 to 492 (VIPKRPKISDNQISEILTKDNNPKDDVKKASKKPESTSKKQATLDKFF). Over residues 461–482 (LTKDNNPKDDVKKASKKPESTS) the composition is skewed to basic and acidic residues.

It belongs to the activator 1 small subunits family. RfcL subfamily. As to quaternary structure, heteromultimer composed of small subunits (RfcS) and large subunits (RfcL).

In terms of biological role, part of the RFC clamp loader complex which loads the PCNA sliding clamp onto DNA. This is Replication factor C large subunit from Methanococcus vannielii (strain ATCC 35089 / DSM 1224 / JCM 13029 / OCM 148 / SB).